Here is a 135-residue protein sequence, read N- to C-terminus: Small ribosomal subunit protein uS9 (135 aa).

The protein belongs to the universal ribosomal protein uS9 family.

The chain is Small ribosomal subunit protein uS9 from Petrotoga mobilis (strain DSM 10674 / SJ95).